Reading from the N-terminus, the 823-residue chain is Valine--tRNA ligase (823 aa).

Residues 52–62 (PTVSGVLHMGH) carry the 'HIGH' region motif. The 'KMSKS' region signature appears at 549–553 (KMSKS). Position 552 (Lys-552) interacts with ATP.

Belongs to the class-I aminoacyl-tRNA synthetase family. ValS type 2 subfamily. As to quaternary structure, monomer.

It localises to the cytoplasm. The catalysed reaction is tRNA(Val) + L-valine + ATP = L-valyl-tRNA(Val) + AMP + diphosphate. In terms of biological role, catalyzes the attachment of valine to tRNA(Val). As ValRS can inadvertently accommodate and process structurally similar amino acids such as threonine, to avoid such errors, it has a 'posttransfer' editing activity that hydrolyzes mischarged Thr-tRNA(Val) in a tRNA-dependent manner. In Anaplasma marginale (strain St. Maries), this protein is Valine--tRNA ligase.